Reading from the N-terminus, the 230-residue chain is Protein STK_02290 (230 aa).

The 199-residue stretch at 15-213 (NLGKVLIKIA…EEKPKSEKIL (199 aa)) folds into the AMMECR1 domain.

In Sulfurisphaera tokodaii (strain DSM 16993 / JCM 10545 / NBRC 100140 / 7) (Sulfolobus tokodaii), this protein is Protein STK_02290.